A 359-amino-acid polypeptide reads, in one-letter code: Endosome-associated-trafficking regulator 1 (359 aa).

Phosphoserine is present on residues S18 and S74. Positions 100–125 are required for interaction with PTPN13; sequence LLDEDEDEEDGWNGAYLPSAMEQTHS. The tract at residues 153 to 180 is disordered; it reads SLPPWTLSDSDSRISPTGSPSADFTAHG. Polar residues predominate over residues 159–174; sequence LSDSDSRISPTGSPSA. 2 positions are modified to phosphoserine: S167 and S171. Residues 185 to 295 are a coiled coil; that stretch reads DRHLRTLQIS…FKRENEALRS (111 aa).

This sequence belongs to the ENTR1 family. In terms of assembly, found in a complex with ENTR1, PTPN13 and GIT1. Interacts with PTPN13 (via the FERM domain). Interacts (via N-terminus) with GIT1 (via N- and C-terminus); this interaction is direct. Interacts with NOD2. Interacts (via N-terminus) with IFT88. Interacts with VPS35. In terms of processing, phosphorylated.

The protein resides in the cytoplasm. It is found in the early endosome. Its subcellular location is the endosome. It localises to the recycling endosome. The protein localises to the midbody. The protein resides in the cytoskeleton. It is found in the microtubule organizing center. Its subcellular location is the centrosome. It localises to the cilium basal body. Functionally, endosome-associated protein that plays a role in membrane receptor sorting, cytokinesis and ciliogenesis. Involved in the endosome-to-plasma membrane trafficking and recycling of SNX27-retromer-dependent cargo proteins, such as GLUT1. Involved in the regulation of cytokinesis; the function may involve PTPN13 and GIT1. Plays a role in the formation of cilia. Involved in cargo protein localization, such as PKD2, at primary cilia. Involved in the presentation of the tumor necrosis factor (TNF) receptor TNFRSF1A on the cell surface, and hence in the modulation of the TNF-induced apoptosis. The sequence is that of Endosome-associated-trafficking regulator 1 from Bos taurus (Bovine).